The primary structure comprises 122 residues: UPF0482 protein Spro_2288 (122 aa).

The first 31 residues, 1–31 (MKTLSTQRLLRGMLPVAMLMLMGAWQAPALA), serve as a signal peptide directing secretion. The segment at 46-71 (SNSGAMSTEAARQSKQQFNDTKSLRN) is disordered.

This sequence belongs to the UPF0482 family.

The chain is UPF0482 protein Spro_2288 from Serratia proteamaculans (strain 568).